The primary structure comprises 556 residues: (-)-alpha-pinene synthase (556 aa).

Mg(2+) contacts are provided by D309, D313, D453, and E461. Residues 309 to 313 (DDMYD) carry the DDXXD motif motif.

It belongs to the terpene synthase family. Tpsa subfamily. Mg(2+) is required as a cofactor. The cofactor is Mn(2+). Expressed in ripe fruits and roots. Not detected in vegetative tissues.

The protein resides in the cytoplasm. It is found in the cytosol. It catalyses the reaction (2E)-geranyl diphosphate = (1S,5S)-alpha-pinene + diphosphate. Its pathway is secondary metabolite biosynthesis; terpenoid biosynthesis. Functionally, monoterpene synthase catalyzing the production of (-)-alpha-pinene, beta-phellandrene and beta-myrcene as the major products. Unable to use farnesyl diphosphate as substrate. Exclusively expressed in the fruit of wild strawberries. Not detected in cultivated varieties. The polypeptide is (-)-alpha-pinene synthase (Fragaria vesca (Woodland strawberry)).